Consider the following 315-residue polypeptide: tRNA dimethylallyltransferase (315 aa).

13-20 serves as a coordination point for ATP; it reads GPTASGKT. Substrate is bound at residue 15 to 20; sequence TASGKT. Interaction with substrate tRNA regions lie at residues 38–41, 162–166, 243–248, and 276–283; these read DSAL, QRLSR, RCVGYR, and KRQITWLR.

Belongs to the IPP transferase family. As to quaternary structure, monomer. Requires Mg(2+) as cofactor.

The catalysed reaction is adenosine(37) in tRNA + dimethylallyl diphosphate = N(6)-dimethylallyladenosine(37) in tRNA + diphosphate. Its function is as follows. Catalyzes the transfer of a dimethylallyl group onto the adenine at position 37 in tRNAs that read codons beginning with uridine, leading to the formation of N6-(dimethylallyl)adenosine (i(6)A). In Vibrio vulnificus (strain YJ016), this protein is tRNA dimethylallyltransferase.